The primary structure comprises 144 residues: Putative pre-16S rRNA nuclease (144 aa).

The protein belongs to the YqgF nuclease family.

It is found in the cytoplasm. Functionally, could be a nuclease involved in processing of the 5'-end of pre-16S rRNA. The sequence is that of Putative pre-16S rRNA nuclease from Oenococcus oeni (strain ATCC BAA-331 / PSU-1).